The sequence spans 105 residues: U-scoloptoxin(05)-Sa2a (105 aa).

The signal sequence occupies residues 1–24 (MKEAVKMSCLCIFLFLFLFSLTDA). A disordered region spans residues 79-105 (HVPESNQKDGKVSTHMSSCNTDGCNAN). The span at 92-105 (THMSSCNTDGCNAN) shows a compositional bias: polar residues.

It belongs to the scoloptoxin-05 family. Contains 4 disulfide bonds. As to expression, expressed by the venom gland.

Its subcellular location is the secreted. The chain is U-scoloptoxin(05)-Sa2a from Scolopendra alternans (Florida Keys giant centipede).